A 194-amino-acid polypeptide reads, in one-letter code: Anaphase-promoting complex subunit CDC26 (194 aa).

The segment at 47 to 194 (EPMDQSEPPR…PSSNTRSHRH (148 aa)) is disordered. 2 stretches are compositionally biased toward polar residues: residues 79–94 (GECT…TSAR) and 102–112 (LTLSTPVNPVS). 2 stretches are compositionally biased toward low complexity: residues 154–166 (DESP…PESP) and 174–194 (TPGN…SHRH).

Belongs to the CDC26 family. The APC/C complex is probably composed of at least 12 subunits: apc-2, apc-10, apc-11, cdc-26, emb-1, emb-27, emb-30, mat-1, mat-2, mat-3, such-1 and gfi-3.

The protein localises to the nucleus. It functions in the pathway protein modification; protein ubiquitination. Probable component of the anaphase promoting complex/cyclosome (APC/C), a cell cycle-regulated E3 ubiquitin ligase that controls progression through mitosis and the G1 phase of the cell cycle. The APC/C complex acts by mediating ubiquitination and subsequent degradation of target proteins. Developmental role in early embryogenesis and the metaphase to anaphase transition in meiosis and mitosis. Required for embryonic anterior-posterior axis formation. This Caenorhabditis elegans protein is Anaphase-promoting complex subunit CDC26.